The primary structure comprises 308 residues: 4-diphosphocytidyl-2-C-methyl-D-erythritol kinase (308 aa).

Lysine 23 is an active-site residue. 108–118 is a binding site for ATP; sequence PVAAGIGGGSA. Residue aspartate 150 is part of the active site.

Belongs to the GHMP kinase family. IspE subfamily.

It carries out the reaction 4-CDP-2-C-methyl-D-erythritol + ATP = 4-CDP-2-C-methyl-D-erythritol 2-phosphate + ADP + H(+). It functions in the pathway isoprenoid biosynthesis; isopentenyl diphosphate biosynthesis via DXP pathway; isopentenyl diphosphate from 1-deoxy-D-xylulose 5-phosphate: step 3/6. Its function is as follows. Catalyzes the phosphorylation of the position 2 hydroxy group of 4-diphosphocytidyl-2C-methyl-D-erythritol. This chain is 4-diphosphocytidyl-2-C-methyl-D-erythritol kinase, found in Nitrobacter winogradskyi (strain ATCC 25391 / DSM 10237 / CIP 104748 / NCIMB 11846 / Nb-255).